The following is a 225-amino-acid chain: UPF0173 metal-dependent hydrolase Pisl_0803 (225 aa).

This sequence belongs to the UPF0173 family.

This Pyrobaculum islandicum (strain DSM 4184 / JCM 9189 / GEO3) protein is UPF0173 metal-dependent hydrolase Pisl_0803.